The chain runs to 187 residues: Putative acyl-coenzyme A oxidase At3g06690 (187 aa).

The segment at 1-21 (MTKEPIYSPRMLHRDPDSPRP) is disordered.

This sequence belongs to the acyl-CoA oxidase family.

It catalyses the reaction a 2,3-saturated acyl-CoA + O2 = a (2E)-enoyl-CoA + H2O2. The chain is Putative acyl-coenzyme A oxidase At3g06690 from Arabidopsis thaliana (Mouse-ear cress).